The primary structure comprises 542 residues: CTP synthase (542 aa).

An amidoligase domain region spans residues 1-265; the sequence is MARYVFITGG…DNEVLAAFGI (265 aa). Ser13 is a binding site for CTP. Ser13 lines the UTP pocket. ATP-binding positions include 14 to 19 and Asp71; that span reads SLGKGI. Residues Asp71 and Glu139 each contribute to the Mg(2+) site. CTP-binding positions include 146-148, 186-191, and Lys222; these read DIE and KTKPTQ. Residues 186–191 and Lys222 contribute to the UTP site; that span reads KTKPTQ. Residues 291 to 541 form the Glutamine amidotransferase type-1 domain; the sequence is TIAIVGKYTG…IEAALEQSRL (251 aa). Gly353 serves as a coordination point for L-glutamine. Cys380 serves as the catalytic Nucleophile; for glutamine hydrolysis. L-glutamine-binding positions include 381–384, Glu404, and Arg469; that span reads FGMQ. Residues His514 and Glu516 contribute to the active site.

It belongs to the CTP synthase family. Homotetramer.

It carries out the reaction UTP + L-glutamine + ATP + H2O = CTP + L-glutamate + ADP + phosphate + 2 H(+). It catalyses the reaction L-glutamine + H2O = L-glutamate + NH4(+). The enzyme catalyses UTP + NH4(+) + ATP = CTP + ADP + phosphate + 2 H(+). It participates in pyrimidine metabolism; CTP biosynthesis via de novo pathway; CTP from UDP: step 2/2. Its activity is regulated as follows. Allosterically activated by GTP, when glutamine is the substrate; GTP has no effect on the reaction when ammonia is the substrate. The allosteric effector GTP functions by stabilizing the protein conformation that binds the tetrahedral intermediate(s) formed during glutamine hydrolysis. Inhibited by the product CTP, via allosteric rather than competitive inhibition. Catalyzes the ATP-dependent amination of UTP to CTP with either L-glutamine or ammonia as the source of nitrogen. Regulates intracellular CTP levels through interactions with the four ribonucleotide triphosphates. This is CTP synthase from Rhizobium meliloti (strain 1021) (Ensifer meliloti).